Here is a 426-residue protein sequence, read N- to C-terminus: Glutamate-1-semialdehyde 2,1-aminomutase (426 aa).

The residue at position 265 (Lys265) is an N6-(pyridoxal phosphate)lysine.

It belongs to the class-III pyridoxal-phosphate-dependent aminotransferase family. HemL subfamily. In terms of assembly, homodimer. Pyridoxal 5'-phosphate is required as a cofactor.

Its subcellular location is the cytoplasm. It carries out the reaction (S)-4-amino-5-oxopentanoate = 5-aminolevulinate. It functions in the pathway porphyrin-containing compound metabolism; protoporphyrin-IX biosynthesis; 5-aminolevulinate from L-glutamyl-tRNA(Glu): step 2/2. The protein is Glutamate-1-semialdehyde 2,1-aminomutase of Escherichia coli O127:H6 (strain E2348/69 / EPEC).